The following is a 147-amino-acid chain: METLTAISRWLEKQHVVTWCVQQEGELWCANAFYLFDTQKVAFYILTEEKTRHAQMSGPQAAVAGTVNGQPKTVALIRGVQFKGEIRRLEGEESDLARQAYNRRFPVARMLSAPVWEIRLDEIKFTDNTLGFGKKMIWLRNSGTEQA.

This sequence belongs to the UPF0306 family.

The polypeptide is UPF0306 protein YhbP (Escherichia coli O7:K1 (strain IAI39 / ExPEC)).